The sequence spans 465 residues: Argininosuccinate lyase (465 aa).

It belongs to the lyase 1 family. Argininosuccinate lyase subfamily.

It is found in the cytoplasm. It carries out the reaction 2-(N(omega)-L-arginino)succinate = fumarate + L-arginine. It functions in the pathway amino-acid biosynthesis; L-arginine biosynthesis; L-arginine from L-ornithine and carbamoyl phosphate: step 3/3. This is Argininosuccinate lyase from Rhodopseudomonas palustris (strain BisB18).